Here is a 356-residue protein sequence, read N- to C-terminus: Nuclear hormone receptor family member nhr-42 (356 aa).

The nuclear receptor DNA-binding region spans 7–82 (SQTCLICGDS…VGMRESAVLS (76 aa)). The NR C4-type zinc finger occupies 10–30 (CLICGDSADSLHFGALSCRAC). The segment at 48 to 70 (CDRQCKVDTGMRKLCASCRYDKC) adopts an NR C4-type; atypical zinc-finger fold. The region spanning 108 to 356 (TSDSVLENLQ…HSSIFGNMAE (249 aa)) is the NR LBD domain.

The protein belongs to the nuclear hormone receptor family.

It localises to the nucleus. Its function is as follows. Orphan nuclear receptor. This is Nuclear hormone receptor family member nhr-42 (nhr-42) from Caenorhabditis elegans.